The primary structure comprises 251 residues: Ubiquinone/menaquinone biosynthesis C-methyltransferase UbiE (251 aa).

Residues Thr74, Asp95, and 123–124 (NA) contribute to the S-adenosyl-L-methionine site.

It belongs to the class I-like SAM-binding methyltransferase superfamily. MenG/UbiE family.

The enzyme catalyses a 2-demethylmenaquinol + S-adenosyl-L-methionine = a menaquinol + S-adenosyl-L-homocysteine + H(+). It carries out the reaction a 2-methoxy-6-(all-trans-polyprenyl)benzene-1,4-diol + S-adenosyl-L-methionine = a 5-methoxy-2-methyl-3-(all-trans-polyprenyl)benzene-1,4-diol + S-adenosyl-L-homocysteine + H(+). Its pathway is quinol/quinone metabolism; menaquinone biosynthesis; menaquinol from 1,4-dihydroxy-2-naphthoate: step 2/2. It functions in the pathway cofactor biosynthesis; ubiquinone biosynthesis. Its function is as follows. Methyltransferase required for the conversion of demethylmenaquinol (DMKH2) to menaquinol (MKH2) and the conversion of 2-polyprenyl-6-methoxy-1,4-benzoquinol (DDMQH2) to 2-polyprenyl-3-methyl-6-methoxy-1,4-benzoquinol (DMQH2). In Shewanella halifaxensis (strain HAW-EB4), this protein is Ubiquinone/menaquinone biosynthesis C-methyltransferase UbiE.